Reading from the N-terminus, the 310-residue chain is Ribosomal RNA small subunit methyltransferase H (310 aa).

S-adenosyl-L-methionine contacts are provided by residues 33-35, Asp52, Phe79, Asp98, and Gln105; that span reads GGH.

The protein belongs to the methyltransferase superfamily. RsmH family.

The protein localises to the cytoplasm. The catalysed reaction is cytidine(1402) in 16S rRNA + S-adenosyl-L-methionine = N(4)-methylcytidine(1402) in 16S rRNA + S-adenosyl-L-homocysteine + H(+). Its function is as follows. Specifically methylates the N4 position of cytidine in position 1402 (C1402) of 16S rRNA. The polypeptide is Ribosomal RNA small subunit methyltransferase H (Campylobacter jejuni subsp. jejuni serotype O:23/36 (strain 81-176)).